Here is a 154-residue protein sequence, read N- to C-terminus: MLINKTKGKVWTGRVKIADTFFKRFRGLMLTPNVNYALVFILPSETRLNASIHMFFMLQSIDVIFLDSSREVVDLKRARPWRFYVPKGGAKYIIETPVGVIDYLNAEIGDEIDWEVEEERSAIPSPVEALNKIGIKNSNGTISLAEPKPKLKGE.

This sequence belongs to the UPF0127 family.

This is UPF0127 protein TSIB_1463 from Thermococcus sibiricus (strain DSM 12597 / MM 739).